The chain runs to 614 residues: Vitamin B12 transporter BtuB (614 aa).

Residues 1 to 20 (MIKKASLLTACSVTAFSAWA) form the signal peptide. Residues 26-33 (DTLVVTAI) carry the TonB box motif. In terms of domain architecture, TBDR plug spans 38-152 (PRSTVLAPTT…IGGVVNIITT (115 aa)). Cyanocob(III)alamin is bound by residues Leu-83, Ser-85, Asn-92, and 110 to 111 (VS). A TBDR beta-barrel domain is found at 155 to 614 (EPGTEISAGW…EYTLSGSYTF (460 aa)). 3 beta stranded membrane passes run 158-165 (TEISAGWG), 169-178 (YQNYDVSTQQ), and 184-195 (TRVTLLGDYAHT). Ca(2+)-binding residues include Asp-199, Gln-211, Asp-213, and Asp-215. Beta stranded transmembrane passes span 217–227 (FLSKTLYGALE) and 232–248 (DAWS…NRTN). Residues Tyr-249 and Asp-250 each contribute to the Ca(2+) site. Ala-251 lines the cyanocob(III)alamin pocket. Asp-261 is a binding site for Ca(2+). 14 consecutive transmembrane segments (beta stranded) span residues 263–277 (RKLY…LRYN), 279–296 (ELIK…KDYN), 309–325 (TLDE…NNVI), 328–337 (HGSIGAGVDW), 353–369 (YDQR…QQVG), 371–381 (FTFEGAARSDD), 385–400 (FGRH…WEFI), 403–417 (YRFI…KAPN), 434–443 (KSKQWEGAFE), 449–458 (VNWRISGYRN), 473–490 (YYNE…TANF), 494–509 (PLTH…ARNA), 517–529 (RRAK…QLDW), and 535–550 (DWGI…YDKD). Thr-309 provides a ligand contact to cyanocob(III)alamin. Arg-517 provides a ligand contact to cyanocob(III)alamin. Tyr-551 is a binding site for cyanocob(III)alamin. 3 beta stranded membrane-spanning segments follow: residues 558–572 (TVKM…LAVA), 585–596 (IANLFDKDYETV), and 602–614 (AGRE…SYTF). A TonB C-terminal box motif is present at residues 597-614 (YGYQTAGREYTLSGSYTF).

This sequence belongs to the TonB-dependent receptor family. BtuB (TC 1.B.14.3.1) subfamily.

The protein localises to the cell outer membrane. Functionally, involved in the active translocation of vitamin B12 (cyanocobalamin) across the outer membrane to the periplasmic space. It derives its energy for transport by interacting with the trans-periplasmic membrane protein TonB. In Shigella flexneri serotype 5b (strain 8401), this protein is Vitamin B12 transporter BtuB.